Reading from the N-terminus, the 335-residue chain is Dihydroorotate dehydrogenase (quinone) (335 aa).

Residues 59–63 (AGLDK) and T83 each bind FMN. K63 contributes to the substrate binding site. 108–112 (NRMGF) contacts substrate. FMN-binding residues include N136 and N169. Position 169 (N169) interacts with substrate. Catalysis depends on S172, which acts as the Nucleophile. A substrate-binding site is contributed by N174. FMN-binding residues include K214 and T242. 243 to 244 (NT) is a binding site for substrate. FMN is bound by residues G265, G294, and 315–316 (YS).

This sequence belongs to the dihydroorotate dehydrogenase family. Type 2 subfamily. As to quaternary structure, monomer. FMN is required as a cofactor.

The protein localises to the cell membrane. It carries out the reaction (S)-dihydroorotate + a quinone = orotate + a quinol. It participates in pyrimidine metabolism; UMP biosynthesis via de novo pathway; orotate from (S)-dihydroorotate (quinone route): step 1/1. In terms of biological role, catalyzes the conversion of dihydroorotate to orotate with quinone as electron acceptor. This Neisseria meningitidis serogroup B (strain ATCC BAA-335 / MC58) protein is Dihydroorotate dehydrogenase (quinone).